We begin with the raw amino-acid sequence, 718 residues long: Exostosin-2 (718 aa).

The Cytoplasmic segment spans residues 1–25; sequence MCASVKYNIRGPALIPRMKTKHRIY. Residues 26 to 46 form a helical; Signal-anchor for type II membrane protein membrane-spanning segment; that stretch reads YITLFSIVLLGLIATGMFQFW. The Lumenal segment spans residues 47 to 718; sequence PHSIESSNDW…LKSFPNIGSL (672 aa). Disulfide bonds link Cys-85–Cys-90, Cys-96–Cys-151, Cys-286–Cys-300, and Cys-318–Cys-339. Asn-288 carries an N-linked (GlcNAc...) asparagine glycan. Positions 461, 465, 490, and 517 each coordinate UDP. UDP-N-acetyl-alpha-D-glucosamine is bound by residues Arg-465, Asn-490, Asn-517, Arg-522, Asp-538, Asp-539, and Asp-540. UDP is bound by residues Asp-538 and Asp-539. Residue Asp-540 coordinates Mn(2+). Residues Tyr-582 and Ser-584 each coordinate a protein. The cysteines at positions 626 and 676 are disulfide-linked. Residues Glu-627 and Asp-628 each coordinate UDP-N-acetyl-alpha-D-glucosamine. An N-linked (GlcNAc...) asparagine glycan is attached at Asn-637. The a protein site is built by Lys-651 and Lys-653. Arg-673 is a UDP-N-acetyl-alpha-D-glucosamine binding site.

It belongs to the glycosyltransferase 47 family. Part of the heparan sulfate polymerase, a dimeric complex composed of EXT1 and EXT2. Could also form homooligomeric complexes. Interacts with NDST1. Interacts with GALNT5. Mn(2+) serves as cofactor. N-glycosylated at Asn-637. Post-translationally, a soluble form is generated by proteolytic processing. As to expression, widely expressed.

The protein resides in the golgi apparatus membrane. Its subcellular location is the golgi apparatus. It is found in the cis-Golgi network membrane. The protein localises to the endoplasmic reticulum membrane. It localises to the secreted. The enzyme catalyses 3-O-{[(1-&gt;4)-beta-D-GlcA-(1-&gt;4)-alpha-D-GlcNAc](n)-(1-&gt;4)-beta-D-GlcA-(1-&gt;3)-beta-D-Gal-(1-&gt;3)-beta-D-Gal-(1-&gt;4)-beta-D-Xyl}-L-seryl-[protein] + UDP-N-acetyl-alpha-D-glucosamine = 3-O-{alpha-D-GlcNAc-[(1-&gt;4)-beta-D-GlcA-(1-&gt;4)-alpha-D-GlcNAc](n)-(1-&gt;4)-beta-D-GlcA-(1-&gt;3)-beta-D-Gal-(1-&gt;3)-beta-D-Gal-(1-&gt;4)-beta-D-Xyl}-L-seryl-[protein] + UDP + H(+). The protein operates within protein modification; protein glycosylation. Glycosyltransferase forming with EXT1 the heterodimeric heparan sulfate polymerase which catalyzes the elongation of the heparan sulfate glycan backbone. Glycan backbone extension consists in the alternating transfer of (1-&gt;4)-beta-D-GlcA and (1-&gt;4)-alpha-D-GlcNAc residues from their respective UDP-sugar donors. Both EXT1 and EXT2 are required for the full activity of the polymerase since EXT1 bears the N-acetylglucosaminyl-proteoglycan 4-beta-glucuronosyltransferase activity within the complex while EXT2 carries the glucuronosyl-N-acetylglucosaminyl-proteoglycan 4-alpha-N-acetylglucosaminyltransferase activity. Heparan sulfate proteoglycans are ubiquitous components of the extracellular matrix and play an important role in tissue homeostasis and signaling. The chain is Exostosin-2 from Homo sapiens (Human).